Consider the following 261-residue polypeptide: MSDILDRIIAVKREEIAAALRSTPLEALKLEASARDLRDFVGALRAKHAAGNAAVIAEIKKASPSKGVLREHFVPADIARSYAAHGAACLSVLTDEQFFQGGVRYLEEARAACTLPVLRKDFIVDAYQIVEARAMGADAILLIAAALDTPLMQDLEAYAHSLGLAVLVEVHDRHEMEQALTLKTPLLGINNRNLRTFETSIQTTLDMLDMIPADRIVVTESGILSRTDVDTMRAANVNTFLVGEAFMRAEQPGEELARMFF.

It belongs to the TrpC family.

It carries out the reaction 1-(2-carboxyphenylamino)-1-deoxy-D-ribulose 5-phosphate + H(+) = (1S,2R)-1-C-(indol-3-yl)glycerol 3-phosphate + CO2 + H2O. It participates in amino-acid biosynthesis; L-tryptophan biosynthesis; L-tryptophan from chorismate: step 4/5. The polypeptide is Indole-3-glycerol phosphate synthase (Burkholderia cenocepacia (strain HI2424)).